Reading from the N-terminus, the 427-residue chain is METKIEKVLKILEEEIVAAEGCTEPIALSYAAAKARRILGTVPNKVDVFLSGNIIKNVKSVTIPNSEGMIGIEPAIAMGLIAGDDKKELMVISDTTHEQVQEVRDFLDKKLIKTHVYPGDIKLYIRLEISNGENNVLLEIKHTHTNITRILKNDKVLLSQICNDGDFNSSLTDRKVLSVKYIYDLAKTIDIDLIKPIFQKVIRYNSAIADEGLKGKYGVNIGKMILDNIEKGIYGNDVRNKAASYASAGSDARMSGCALPVMTTSGSGNQGMTASLPVIKFAAEKNLSEEELIRGLFVSHLITIHVKTNVGRLSAYCGAICAASGVAAALTFLHGGSFEMVCDAITNILGNLSGVICDGAKASCAMKISSGIYSAFDATMLALNKDVLKSGDGIVGVDIEETIRNVGELAQCGMKGTDETILGIMTK.

Belongs to the UPF0597 family.

This Fusobacterium nucleatum subsp. nucleatum (strain ATCC 25586 / DSM 15643 / BCRC 10681 / CIP 101130 / JCM 8532 / KCTC 2640 / LMG 13131 / VPI 4355) protein is UPF0597 protein FN1147.